The chain runs to 438 residues: MAALVAAEAAESCSRNGPGRGRAPRGRLANQIPAEILNNPQLQAAIQVLPSNYNFEVPKTIWRIQQAQAKKVALQMPEGLLLFACTIVDILERFTEAEVMVMGDVTYGACCVDDFTARALGADFLVHYGHSCLVPMDTSAQDFRVLYVFVDIRIDTAHLLDSIRLTFPPASALALVSTIQFVSTLQAAAQELKAEYRVSVPQCKPLSPGEILGCTSPCLPKEVEAVVYLGDGRFHLESVMIANPNISAYRYDPYSKVLSREHYDHQRMQANRQEAIATARSAKSWGLILGTLGRQGSPKILEHLESRLQALGLPFVRLLLSEIFPSKLSLLPEVDVWVQVACPRLSIDWGTAFPKPLLTPYEAAVALRDISWQQPYPMDFYASSSLGPWTVNHGRDRLLQVPGRLALGKVQGGPARPSPAAACEACSCRDEEVSPIAL.

Positions 110, 214, and 342 each coordinate [4Fe-4S] cluster. Position 418 is a phosphoserine (Ser418).

The protein belongs to the DPH1/DPH2 family. DPH1 subfamily. Component of the 2-(3-amino-3-carboxypropyl)histidine synthase complex composed of DPH1, DPH2, DPH3 and a NADH-dependent reductase. Interacts with DPH2 and RBM8A. Requires [4Fe-4S] cluster as cofactor.

The protein resides in the nucleus. The protein localises to the cytoplasm. The catalysed reaction is L-histidyl-[translation elongation factor 2] + S-adenosyl-L-methionine = 2-[(3S)-amino-3-carboxypropyl]-L-histidyl-[translation elongation factor 2] + S-methyl-5'-thioadenosine + H(+). Its pathway is protein modification; peptidyl-diphthamide biosynthesis. Catalyzes the first step of diphthamide biosynthesis, a post-translational modification of histidine which occurs in elongation factor 2. DPH1 and DPH2 transfer a 3-amino-3-carboxypropyl (ACP) group from S-adenosyl-L-methionine (SAM) to a histidine residue, the reaction is assisted by a reduction system comprising DPH3 and a NADH-dependent reductase. This Bos taurus (Bovine) protein is 2-(3-amino-3-carboxypropyl)histidine synthase subunit 1 (DPH1).